The sequence spans 382 residues: DNA replication and repair protein RecF (382 aa).

Gly-30–Ser-37 is a binding site for ATP.

Belongs to the RecF family.

The protein resides in the cytoplasm. In terms of biological role, the RecF protein is involved in DNA metabolism; it is required for DNA replication and normal SOS inducibility. RecF binds preferentially to single-stranded, linear DNA. It also seems to bind ATP. The chain is DNA replication and repair protein RecF from Magnetococcus marinus (strain ATCC BAA-1437 / JCM 17883 / MC-1).